Reading from the N-terminus, the 212-residue chain is Large ribosomal subunit protein uL1 (212 aa).

Belongs to the universal ribosomal protein uL1 family. As to quaternary structure, part of the 50S ribosomal subunit.

Binds directly to 23S rRNA. Probably involved in E site tRNA release. Its function is as follows. Protein L1 is also a translational repressor protein, it controls the translation of its operon by binding to its mRNA. In Methanobrevibacter smithii (strain ATCC 35061 / DSM 861 / OCM 144 / PS), this protein is Large ribosomal subunit protein uL1.